Reading from the N-terminus, the 32-residue chain is MSDIN-like toxin proprotein a (32 aa).

Positions 1–10 (MSDINATRLP) are excised as a propeptide. The cyclopeptide (Ile-Pro) cross-link spans 11–18 (IIGILLPP). Residues 19–32 (CIGDDVTLLLTRGE) constitute a propeptide that is removed on maturation.

It belongs to the MSDIN fungal toxin family. In terms of processing, processed by the macrocyclase-peptidase enzyme POPB to yield a toxic cyclic octapeptide. POPB first removes 10 residues from the N-terminus. Conformational trapping of the remaining peptide forces the enzyme to release this intermediate rather than proceed to macrocyclization. The enzyme rebinds the remaining peptide in a different conformation and catalyzes macrocyclization of the N-terminal 8 residues.

Functionally, probable toxin that belongs to the MSDIN-like toxin family responsible for a large number of food poisoning cases and deaths. This Amanita phalloides (Death cap) protein is MSDIN-like toxin proprotein a.